Here is a 91-residue protein sequence, read N- to C-terminus: Defensin-like protein 82 (91 aa).

The N-terminal stretch at 1-27 (MAIKKFSSLLLPLLMVLALVVLPIISG) is a signal peptide. 4 disulfides stabilise this stretch: Cys34–Cys72, Cys41–Cys62, Cys47–Cys70, and Cys51–Cys71.

It belongs to the DEFL family.

It is found in the secreted. This is Defensin-like protein 82 from Arabidopsis thaliana (Mouse-ear cress).